A 396-amino-acid polypeptide reads, in one-letter code: MKVPRLLLALGGLASIHIASALPQGAVERDMHATSAVVHGGNVKTKFPSTTGLKFTIDGETGYFAGSNSYWIGFLTNNADVDLVFQHMKESGLKILRVWGFNDVNTKPATGTVWYQLHANGTSTINTGPDGLQRLDYVVHSAERHGIKLIINFVNNWNDYGGINSYLQAYGGASNEDFYNSEPMQKAYRAYIKEVVSRYIDSPAVFAWELANEPRCKGCDTSVLHSWIEKTSRYIKSLDKKHMVTTGEEGFGLDLMSDGSYPFTYVEGGNFTDTLSIPTIDFGTFHLYPSSWGTTNDWGNLWVEAHGAACKAAGKPRLFEEYGVTADHCALEKPWQTTALKTKGVSGDLYWQYGDTLSTGPSPDDGNTFYYGTDEFDCLVSDHVAAIDEMEKHGRH.

Residues 1–21 (MKVPRLLLALGGLASIHIASA) form the signal peptide. Residue Trp-99 coordinates substrate. N-linked (GlcNAc...) asparagine glycosylation is present at Asn-120. A substrate-binding site is contributed by Asn-212. Glu-213 acts as the Proton donor in catalysis. Asn-270 is a glycosylation site (N-linked (GlcNAc...) asparagine). Tyr-288 provides a ligand contact to substrate. The active-site Nucleophile is the Glu-321. Trp-351 contacts substrate.

It belongs to the glycosyl hydrolase 5 (cellulase A) family.

It localises to the secreted. It carries out the reaction Random hydrolysis of (1-&gt;4)-beta-D-mannosidic linkages in mannans, galactomannans and glucomannans.. In terms of biological role, endo-1,4-mannanase, a crucial enzyme for depolymerization of seed galactomannans and wood galactoglucomannans. The protein is Probable mannan endo-1,4-beta-mannosidase A-2 (manA-2) of Aspergillus terreus (strain NIH 2624 / FGSC A1156).